A 92-amino-acid chain; its full sequence is Small ribosomal subunit protein bS20 (92 aa).

Residues 1 to 25 (MANSAQARKRARQAAKANSHNSALR) are disordered.

Belongs to the bacterial ribosomal protein bS20 family.

Its function is as follows. Binds directly to 16S ribosomal RNA. In Paraburkholderia phytofirmans (strain DSM 17436 / LMG 22146 / PsJN) (Burkholderia phytofirmans), this protein is Small ribosomal subunit protein bS20.